The following is a 594-amino-acid chain: Type I restriction enzyme EcoEI specificity subunit (594 aa).

Belongs to the type-I restriction system S methylase family. The type I restriction/modification system is composed of three polypeptides R, M and S; the restriction enzyme has stoichiometry R(2)M(2)S(1) while the methyltransferase is M(2)S(1).

Functionally, the specificity (S) subunit of a type I restriction enzyme; this subunit dictates DNA sequence specificity. The M and S subunits together form a methyltransferase (MTase) that methylates two adenine residues of the sequence 5'-GAGN(7)ATGC-3'. In the presence of the R subunit the complex can also act as an endonuclease, binding to the same target sequence but cutting the DNA some distance from this site. Whether the DNA is cut or modified depends on the methylation state of the target sequence. When the target site is unmodified, the DNA is cut. When the target site is hemimethylated, the complex acts as a maintenance MTase modifying the DNA so that both strands become methylated. After locating a non-methylated recognition site, the enzyme complex serves as a molecular motor that translocates DNA in an ATP-dependent manner until a collision occurs that triggers cleavage. The sequence is that of Type I restriction enzyme EcoEI specificity subunit from Escherichia coli.